The primary structure comprises 392 residues: Methylthioribose-1-phosphate isomerase (392 aa).

Residue Asp267 is the Proton donor of the active site.

The protein belongs to the eIF-2B alpha/beta/delta subunits family. MtnA subfamily.

The protein localises to the cytoplasm. The protein resides in the nucleus. The enzyme catalyses 5-(methylsulfanyl)-alpha-D-ribose 1-phosphate = 5-(methylsulfanyl)-D-ribulose 1-phosphate. Its pathway is amino-acid biosynthesis; L-methionine biosynthesis via salvage pathway; L-methionine from S-methyl-5-thio-alpha-D-ribose 1-phosphate: step 1/6. Its function is as follows. Catalyzes the interconversion of methylthioribose-1-phosphate (MTR-1-P) into methylthioribulose-1-phosphate (MTRu-1-P). The polypeptide is Methylthioribose-1-phosphate isomerase (Ajellomyces dermatitidis (strain ER-3 / ATCC MYA-2586) (Blastomyces dermatitidis)).